Consider the following 388-residue polypeptide: NADH-quinone oxidoreductase subunit D 2 (388 aa).

Belongs to the complex I 49 kDa subunit family. In terms of assembly, NDH-1 is composed of 14 different subunits. Subunits NuoB, C, D, E, F, and G constitute the peripheral sector of the complex.

The protein resides in the cell inner membrane. It catalyses the reaction a quinone + NADH + 5 H(+)(in) = a quinol + NAD(+) + 4 H(+)(out). In terms of biological role, NDH-1 shuttles electrons from NADH, via FMN and iron-sulfur (Fe-S) centers, to quinones in the respiratory chain. The immediate electron acceptor for the enzyme in this species is believed to be ubiquinone. Couples the redox reaction to proton translocation (for every two electrons transferred, four hydrogen ions are translocated across the cytoplasmic membrane), and thus conserves the redox energy in a proton gradient. In Sorangium cellulosum (strain So ce56) (Polyangium cellulosum (strain So ce56)), this protein is NADH-quinone oxidoreductase subunit D 2.